A 527-amino-acid polypeptide reads, in one-letter code: Probable guanine deaminase (527 aa).

Zn(2+)-binding residues include histidine 79 and histidine 81. Residues 81-84 (HAPQ), 212-213 (RF), 239-242 (HISE), and aspartate 329 each bind substrate. Positions 239 and 329 each coordinate Zn(2+).

This sequence belongs to the metallo-dependent hydrolases superfamily. ATZ/TRZ family. Requires Zn(2+) as cofactor.

The enzyme catalyses guanine + H2O + H(+) = xanthine + NH4(+). It participates in purine metabolism; guanine degradation; xanthine from guanine: step 1/1. Its function is as follows. Catalyzes the hydrolytic deamination of guanine, producing xanthine and ammonia. The chain is Probable guanine deaminase from Schizosaccharomyces pombe (strain 972 / ATCC 24843) (Fission yeast).